We begin with the raw amino-acid sequence, 521 residues long: Sodium/hydrogen exchanger 5 (521 aa).

Over 1-23 (MEEVMISPVEHDPQGQVKQQQAA) the chain is Cytoplasmic. A helical membrane pass occupies residues 24–44 (GVGILLQIMMLVLSFVLGHVL). Residues 45–48 (RRHR) lie on the Lumenal side of the membrane. A helical membrane pass occupies residues 49-69 (FHYLPEASGSLLIGLIVGILA). Residues 70-86 (NISDTETSIRTWFNFHE) are Cytoplasmic-facing. Positions 87–107 (EFFFLFLLPPIIFQSGFSLQP) form an intramembrane region, helical. Over 108 to 115 (KPFFSNFG) the chain is Cytoplasmic. The helical transmembrane segment at 116–136 (AIVTFAIIGTFVASVVTGGLV) threads the bilayer. Residues 137 to 141 (YLGGS) are Lumenal-facing. 2 consecutive intramembrane regions (helical) follow at residues 142–162 (MYLM…LISA) and 166–186 (VTVL…ALVF). At 187–222 (GESVLNDAMAISLYRTMSLVNRQSSSGEHFFMVVIR) the chain is on the lumenal side. A helical membrane pass occupies residues 223-243 (FFETFAGSMSAGVGVGFTSAL). At 244–271 (LFKYAGLDTENLQNLECCLFVLFPYFSY) the chain is on the cytoplasmic side. A helical transmembrane segment spans residues 272–292 (MLAEGVGLSGIVSILFTGIVM). Residues 293-310 (KRYTFSNLSEASQSFVSS) lie on the Lumenal side of the membrane. N-linked (GlcNAc...) asparagine glycosylation is present at asparagine 299. A helical membrane pass occupies residues 311 to 331 (FFHLISSLAETFTFIYMGFDI). At 332-340 (AMEQHSWSH) the chain is on the cytoplasmic side. Residues 341-361 (VGFILFSILFIGVARAVNVFG) traverse the membrane as a helical segment. Topologically, residues 362 to 382 (CAYLVNLFRQENQKIPMKHQK) are lumenal. The helical transmembrane segment at 383-402 (ALWYSGLRGAMAFALALQSL) threads the bilayer. At 403–411 (HDLPEGHGQ) the chain is on the cytoplasmic side. A helical transmembrane segment spans residues 412-432 (IIFTATTTIVVVTVLLIGGST). Over 433–521 (GKMLEALEVV…NSGDGDGDGE (89 aa)) the chain is Lumenal. The interval 453 to 480 (GFEESDHQYVPPPFSIGASSDEDTSSSG) is disordered. The segment covering 467-480 (SIGASSDEDTSSSG) has biased composition (low complexity).

Belongs to the monovalent cation:proton antiporter 1 (CPA1) transporter (TC 2.A.36) family. As to expression, expressed in roots, leaves, stems, flowers and siliques. Detected at low levels in roots and shoots.

It is found in the endosome membrane. The protein resides in the golgi apparatus. The protein localises to the trans-Golgi network membrane. Its subcellular location is the golgi stack membrane. The catalysed reaction is Na(+)(in) + H(+)(out) = Na(+)(out) + H(+)(in). It catalyses the reaction K(+)(in) + H(+)(out) = K(+)(out) + H(+)(in). Its function is as follows. Involved in trafficking to the vacuole. Required for cell proliferation and cell expansion, but not for cell differentiation. Acts in low affinity electroneutral exchange of protons for cations such as Na(+) or K(+) across membranes. May also exchange Li(+) and Cs(+) with a lower affinity. The polypeptide is Sodium/hydrogen exchanger 5 (NHX5) (Arabidopsis thaliana (Mouse-ear cress)).